The following is a 116-amino-acid chain: Large ribosomal subunit protein bL19 (116 aa).

The protein belongs to the bacterial ribosomal protein bL19 family.

In terms of biological role, this protein is located at the 30S-50S ribosomal subunit interface and may play a role in the structure and function of the aminoacyl-tRNA binding site. The chain is Large ribosomal subunit protein bL19 from Roseiflexus castenholzii (strain DSM 13941 / HLO8).